Here is a 517-residue protein sequence, read N- to C-terminus: UDP-N-acetylmuramoyl-L-alanyl-D-glutamate--2,6-diaminopimelate ligase (517 aa).

Residues L34 and S36 each coordinate UDP-N-acetyl-alpha-D-muramoyl-L-alanyl-D-glutamate. 122 to 128 provides a ligand contact to ATP; it reads GTSGKTT. UDP-N-acetyl-alpha-D-muramoyl-L-alanyl-D-glutamate contacts are provided by residues 164–165, S191, and R199; that span reads TT. K231 carries the post-translational modification N6-carboxylysine. Residues R394, 418-421, G476, and E480 each bind meso-2,6-diaminopimelate; that span reads DNPR. A Meso-diaminopimelate recognition motif motif is present at residues 418–421; the sequence is DNPR.

This sequence belongs to the MurCDEF family. MurE subfamily. The cofactor is Mg(2+). Carboxylation is probably crucial for Mg(2+) binding and, consequently, for the gamma-phosphate positioning of ATP.

It localises to the cytoplasm. It carries out the reaction UDP-N-acetyl-alpha-D-muramoyl-L-alanyl-D-glutamate + meso-2,6-diaminopimelate + ATP = UDP-N-acetyl-alpha-D-muramoyl-L-alanyl-gamma-D-glutamyl-meso-2,6-diaminopimelate + ADP + phosphate + H(+). The protein operates within cell wall biogenesis; peptidoglycan biosynthesis. In terms of biological role, catalyzes the addition of meso-diaminopimelic acid to the nucleotide precursor UDP-N-acetylmuramoyl-L-alanyl-D-glutamate (UMAG) in the biosynthesis of bacterial cell-wall peptidoglycan. The polypeptide is UDP-N-acetylmuramoyl-L-alanyl-D-glutamate--2,6-diaminopimelate ligase (Corynebacterium glutamicum (strain ATCC 13032 / DSM 20300 / JCM 1318 / BCRC 11384 / CCUG 27702 / LMG 3730 / NBRC 12168 / NCIMB 10025 / NRRL B-2784 / 534)).